A 192-amino-acid polypeptide reads, in one-letter code: Interleukin-18 (192 aa).

A propeptide spanning residues Met1–Asp35 is cleaved from the precursor.

The protein belongs to the IL-1 family. As to quaternary structure, forms a ternary complex with ligand-binding receptor subunit IL18R1 and signaling receptor subunit IL18RAP at the plasma membrane. Mature IL18 first binds to IL18R1 forming a low affinity binary complex, which then interacts with IL18RAP to form a high affinity ternary complex that signals inside the cell. Interacts with cargo receptor TMED10; the interaction mediates the translocation from the cytoplasm into the ERGIC (endoplasmic reticulum-Golgi intermediate compartment) and thereby secretion. The pro-IL-18 precursor is processed by CASP1, CASP4 or CASP5 to yield its mature, active form. The pro-IL-18 precursor features autoinhibitory interactions between the propeptide and the post-cleavage-site region, preventing recognition by the IL18R1 receptor. Processing by CASP1, CASP4 or CASP5 induces conformational changes to generate critical receptor-binding sites. The mature form is then secreted and released in the extracellular milieu by passing through the gasdermin-D (GSDMD) pore. In contrast, cleavage by CASP3 inactivates IL18.

Its subcellular location is the cytoplasm. It is found in the cytosol. The protein localises to the secreted. Pro-inflammatory cytokine primarily involved in epithelial barrier repair, polarized T-helper 1 (Th1) cell and natural killer (NK) cell immune responses. Upon binding to IL18R1 and IL18RAP, forms a signaling ternary complex which activates NF-kappa-B, triggering synthesis of inflammatory mediators. Synergizes with IL12/interleukin-12 to induce IFNG synthesis from T-helper 1 (Th1) cells and natural killer (NK) cells. Involved in transduction of inflammation downstream of pyroptosis: its mature form is specifically released in the extracellular milieu by passing through the gasdermin-D (GSDMD) pore. In Capra hircus (Goat), this protein is Interleukin-18 (IL18).